The sequence spans 245 residues: Exosome complex component RRP41 (245 aa).

The residue at position 2 (Ala2) is an N-acetylalanine.

The protein belongs to the RNase PH family. In terms of assembly, component of the RNA exosome core complex (Exo-9), composed of EXOSC1, EXOSC2, EXOSC3, EXOSC4, EXOSC5, EXOSC6, EXOSC7, EXOSC8 and EXOSC9; within the complex interacts with EXOSC2, EXOSC7 and EXOSC9. The catalytically inactive RNA exosome core complex (Exo-9) associates with the catalytic subunit EXOSC10/RRP6. Exo-9 may associate with DIS3 to form the nucleolar exosome complex, or DIS3L to form the cytoplasmic exosome complex. Exo-9 is formed by a hexameric base ring consisting of the heterodimers EXOSC4-EXOSC9, EXOSC5-EXOSC8 and EXOSC6-EXOSC7, and a cap ring consisting of EXOSC1, EXOSC2 and EXOSC3. The RNA exosome complex associates with cofactors C1D/RRP47, MPHOSPH6/MPP6 and MTREX/MTR4. Interacts with DDX60. Interacts with DIS3; the interaction is direct.

It localises to the cytoplasm. The protein localises to the nucleus. It is found in the nucleolus. Its subcellular location is the nucleoplasm. Non-catalytic component of the RNA exosome complex which has 3'-&gt;5' exoribonuclease activity and participates in a multitude of cellular RNA processing and degradation events. In the nucleus, the RNA exosome complex is involved in proper maturation of stable RNA species such as rRNA, snRNA and snoRNA, in the elimination of RNA processing by-products and non-coding 'pervasive' transcripts, such as antisense RNA species and promoter-upstream transcripts (PROMPTs), and of mRNAs with processing defects, thereby limiting or excluding their export to the cytoplasm. The RNA exosome may be involved in Ig class switch recombination (CSR) and/or Ig variable region somatic hypermutation (SHM) by targeting AICDA deamination activity to transcribed dsDNA substrates. In the cytoplasm, the RNA exosome complex is involved in general mRNA turnover and specifically degrades inherently unstable mRNAs containing AU-rich elements (AREs) within their 3' untranslated regions, and in RNA surveillance pathways, preventing translation of aberrant mRNAs. It seems to be involved in degradation of histone mRNA. The catalytic inactive RNA exosome core complex of 9 subunits (Exo-9) is proposed to play a pivotal role in the binding and presentation of RNA for ribonucleolysis, and to serve as a scaffold for the association with catalytic subunits and accessory proteins or complexes. EXOSC4 binds to ARE-containing RNAs. This chain is Exosome complex component RRP41 (EXOSC4), found in Bos taurus (Bovine).